The chain runs to 225 residues: Biosynthetic peptidoglycan transglycosylase (225 aa).

A helical transmembrane segment spans residues 8–28; the sequence is VLLIFIGAILFIQLWIFSSLV.

Belongs to the glycosyltransferase 51 family.

Its subcellular location is the cell inner membrane. The enzyme catalyses [GlcNAc-(1-&gt;4)-Mur2Ac(oyl-L-Ala-gamma-D-Glu-L-Lys-D-Ala-D-Ala)](n)-di-trans,octa-cis-undecaprenyl diphosphate + beta-D-GlcNAc-(1-&gt;4)-Mur2Ac(oyl-L-Ala-gamma-D-Glu-L-Lys-D-Ala-D-Ala)-di-trans,octa-cis-undecaprenyl diphosphate = [GlcNAc-(1-&gt;4)-Mur2Ac(oyl-L-Ala-gamma-D-Glu-L-Lys-D-Ala-D-Ala)](n+1)-di-trans,octa-cis-undecaprenyl diphosphate + di-trans,octa-cis-undecaprenyl diphosphate + H(+). It participates in cell wall biogenesis; peptidoglycan biosynthesis. Functionally, peptidoglycan polymerase that catalyzes glycan chain elongation from lipid-linked precursors. This Acinetobacter baumannii (strain ATCC 17978 / DSM 105126 / CIP 53.77 / LMG 1025 / NCDC KC755 / 5377) protein is Biosynthetic peptidoglycan transglycosylase.